The sequence spans 199 residues: Holliday junction branch migration complex subunit RuvA (199 aa).

The domain I stretch occupies residues 1 to 62 (MIAYIKGLLA…EDGIQFFGFA (62 aa)). A domain II region spans residues 63-141 (KEDEKECFLL…GMAAVEHSTL (79 aa)). The segment at 142–152 (QQSVITTGSGD) is flexible linker. A domain III region spans residues 152–199 (DEAVEALLALGYSQGEARDAVKKAQKSAPEEDLSALIKIALKELAPSR).

Belongs to the RuvA family. As to quaternary structure, homotetramer. Forms an RuvA(8)-RuvB(12)-Holliday junction (HJ) complex. HJ DNA is sandwiched between 2 RuvA tetramers; dsDNA enters through RuvA and exits via RuvB. An RuvB hexamer assembles on each DNA strand where it exits the tetramer. Each RuvB hexamer is contacted by two RuvA subunits (via domain III) on 2 adjacent RuvB subunits; this complex drives branch migration. In the full resolvosome a probable DNA-RuvA(4)-RuvB(12)-RuvC(2) complex forms which resolves the HJ.

Its subcellular location is the cytoplasm. In terms of biological role, the RuvA-RuvB-RuvC complex processes Holliday junction (HJ) DNA during genetic recombination and DNA repair, while the RuvA-RuvB complex plays an important role in the rescue of blocked DNA replication forks via replication fork reversal (RFR). RuvA specifically binds to HJ cruciform DNA, conferring on it an open structure. The RuvB hexamer acts as an ATP-dependent pump, pulling dsDNA into and through the RuvAB complex. HJ branch migration allows RuvC to scan DNA until it finds its consensus sequence, where it cleaves and resolves the cruciform DNA. The chain is Holliday junction branch migration complex subunit RuvA from Desulforamulus reducens (strain ATCC BAA-1160 / DSM 100696 / MI-1) (Desulfotomaculum reducens).